We begin with the raw amino-acid sequence, 231 residues long: Large ribosomal subunit protein uL1 (231 aa).

Belongs to the universal ribosomal protein uL1 family. As to quaternary structure, part of the 50S ribosomal subunit.

Its function is as follows. Binds directly to 23S rRNA. The L1 stalk is quite mobile in the ribosome, and is involved in E site tRNA release. Functionally, protein L1 is also a translational repressor protein, it controls the translation of the L11 operon by binding to its mRNA. This is Large ribosomal subunit protein uL1 from Moorella thermoacetica (strain ATCC 39073 / JCM 9320).